A 185-amino-acid chain; its full sequence is MSRLRIYDDTRPESPLLDTQDGAIIAAELQKIGVTFERWQATAPVAPGASQEEVFAAYRADIDRLVAERGFKSVDVASIAPDNPNRAELRRKFLDEHFHKEDEVRFFVAGSGLFTLHVGDKVYEIECVKDDLIAVPDGTTHWFDMGDEPSFVAIRFFTEPDGWVGHFTGTDIAQKFPRYVPTQAS.

Fe(2+) is bound by residues histidine 97, histidine 99, glutamate 103, and histidine 141. Ni(2+) is bound by residues histidine 97, histidine 99, glutamate 103, and histidine 141.

It belongs to the acireductone dioxygenase (ARD) family. In terms of assembly, monomer. Requires Fe(2+) as cofactor. Ni(2+) serves as cofactor.

The enzyme catalyses 1,2-dihydroxy-5-(methylsulfanyl)pent-1-en-3-one + O2 = 3-(methylsulfanyl)propanoate + CO + formate + 2 H(+). The catalysed reaction is 1,2-dihydroxy-5-(methylsulfanyl)pent-1-en-3-one + O2 = 4-methylsulfanyl-2-oxobutanoate + formate + 2 H(+). The protein operates within amino-acid biosynthesis; L-methionine biosynthesis via salvage pathway; L-methionine from S-methyl-5-thio-alpha-D-ribose 1-phosphate: step 5/6. Catalyzes 2 different reactions between oxygen and the acireductone 1,2-dihydroxy-3-keto-5-methylthiopentene (DHK-MTPene) depending upon the metal bound in the active site. Fe-containing acireductone dioxygenase (Fe-ARD) produces formate and 2-keto-4-methylthiobutyrate (KMTB), the alpha-ketoacid precursor of methionine in the methionine recycle pathway. Ni-containing acireductone dioxygenase (Ni-ARD) produces methylthiopropionate, carbon monoxide and formate, and does not lie on the methionine recycle pathway. The chain is Acireductone dioxygenase from Stenotrophomonas maltophilia (strain R551-3).